Reading from the N-terminus, the 93-residue chain is Integration host factor subunit beta (93 aa).

It belongs to the bacterial histone-like protein family. As to quaternary structure, heterodimer of an alpha and a beta chain.

Functionally, this protein is one of the two subunits of integration host factor, a specific DNA-binding protein that functions in genetic recombination as well as in transcriptional and translational control. The chain is Integration host factor subunit beta from Actinobacillus pleuropneumoniae serotype 7 (strain AP76).